The chain runs to 1377 residues: Carboxypeptidase D (1377 aa).

The N-terminal stretch at 1 to 37 is a signal peptide; it reads MASGRDERPPWRLGRLRLLPPPPLLLLLLLLRSSAQA. The Extracellular segment spans residues 38–1296; the sequence is AHIKKAEATT…DNRIFGLPRE (1259 aa). The Peptidase M14 1 domain maps to 62 to 379; the sequence is HYYHEAALGE…ESLITLIEKV (318 aa). Positions 138 and 141 each coordinate Zn(2+). The Cell attachment site signature appears at 161-163; the sequence is RGD. Asn171 and Asn216 each carry an N-linked (GlcNAc...) asparagine glycan. The segment at 188-231 is disordered; it reads RAREGDCGLGDSGPPGTSGRDNSRGRDLNRSFPDQFSTGEPPSL. His256 lines the Zn(2+) pocket. Position 264 is a phosphotyrosine (Tyr264). Ser269 is subject to Phosphoserine. Glu349 serves as the catalytic Proton donor/acceptor. N-linked (GlcNAc...) asparagine glycans are attached at residues Asn398, Asn409, Asn428, and Asn521. In terms of domain architecture, Peptidase M14 2 spans 501–791; the sequence is HHHHFPDMEI…RSLIQFMKQV (291 aa). Positions 563 and 566 each coordinate Zn(2+). Residue Asn625 is glycosylated (N-linked (GlcNAc...) asparagine). His670 contacts Zn(2+). The active-site Proton donor/acceptor is Glu761. Asn810, Asn854, Asn866, Asn878, Asn952, and Asn975 each carry an N-linked (GlcNAc...) asparagine glycan. A disordered region spans residues 874–898; it reads ADANNESKKGRGHSTSTDDTSDPTS. Residues 929-1208 form the Peptidase M14 3 domain; it reads RYHSYKDLSE…KSLLSMLVEV (280 aa). Residues 1038–1047 are compositionally biased toward basic and acidic residues; that stretch reads RERAQEKDCT. The disordered stretch occupies residues 1038–1064; the sequence is RERAQEKDCTSKTGHTNAHGKDLDTDF. N-linked (GlcNAc...) asparagine glycosylation is found at Asn1067 and Asn1139. The chain crosses the membrane as a helical span at residues 1297-1317; it reads LVVTVSGATMSALILTACIIW. S-palmitoyl cysteine attachment occurs at residues Cys1314, Cys1318, and Cys1320. Over 1318–1377 the chain is Cytoplasmic; that stretch reads CICSIKSNRHKDGFHRLRQHHDEYEDEIRMMSTGSKKSLLSHEFQDETDTEEETLYSSKH. Ser1355 and Ser1358 each carry phosphoserine. Residues 1356-1377 form a disordered region; it reads LLSHEFQDETDTEEETLYSSKH. Phosphothreonine is present on residues Thr1365 and Thr1367.

The protein belongs to the peptidase M14 family. Zn(2+) serves as cofactor.

The protein resides in the cell membrane. It catalyses the reaction Releases C-terminal Arg and Lys from polypeptides.. The chain is Carboxypeptidase D (Cpd) from Mus musculus (Mouse).